The primary structure comprises 525 residues: Protein-serine O-palmitoleoyltransferase porcupine (525 aa).

A run of 9 helical transmembrane segments spans residues 83–103, 125–145, 159–179, 220–240, 260–280, 301–318, 395–415, 467–487, and 505–525; these read VMQY…LCLL, LIIL…LAAV, GAQV…LLIW, FAYL…WVSF, LLPN…VAPA, VRSS…LLVA, SLLH…AFLA, NLAF…VLLG, and QAGY…LFIS. Residue His-398 is part of the active site.

This sequence belongs to the membrane-bound acyltransferase family. Porcupine subfamily. In terms of assembly, interacts with wg and Wnt5.

Its subcellular location is the endoplasmic reticulum membrane. The enzyme catalyses [Wnt protein]-L-serine + (9Z)-hexadecenoyl-CoA = [Wnt protein]-O-(9Z)-hexadecenoyl-L-serine + CoA. Protein-serine O-palmitoleoyltransferase that acts as a key regulator of the Wnt signaling pathway by mediating the attachment of palmitoleate, a 16-carbon monounsaturated fatty acid (C16:1(9Z)), to Wnt proteins. Serine palmitoleoylation of Wnt proteins is required for efficient binding to frizzled receptors. Also facilitates the glycosylation of Wnt family members, including wg and Wnt5. The cotranslational disulfide bond formation of wg competes with the N-glycosylation. Porc stimulates the post-translational N-glycosylation by anchoring wg at the ER membrane, probably through acylation. The polypeptide is Protein-serine O-palmitoleoyltransferase porcupine (Drosophila melanogaster (Fruit fly)).